The sequence spans 378 residues: Atypical chemokine receptor 2 (378 aa).

The Extracellular segment spans residues 1–49 (MPTVASPLPLTTVGSENSSSIYDYDYLDDMTILVCRKDEVLSFGRVFLP). A glycan (N-linked (GlcNAc...) asparagine) is linked at N17. The helical transmembrane segment at 50–70 (VVYSLIFVLGLAGNLLLLVVL) threads the bilayer. The Cytoplasmic portion of the chain corresponds to 71–91 (LHSAPRRRTMELYLLNLAVSN). A helical transmembrane segment spans residues 92–112 (LLFVVTMPFWAISVAWHWVFG). Over 113–117 (SFLCK) the chain is Extracellular. A disulfide bridge links C116 with C194. Residues 118–139 (VISTLYSINFYCGIFFITCMSL) form a helical membrane-spanning segment. The Cytoplasmic portion of the chain corresponds to 140–161 (DKYLEIVHAQPLHRPKAQFRNL). Residues 162-182 (LLIVMVWITSLAISVPEMVFV) traverse the membrane as a helical segment. Topologically, residues 183–216 (QIHQTLDGVWHCYADFGGHATIWKLYLRFQLNLL) are extracellular. A helical transmembrane segment spans residues 217-237 (GFLLPLLAMIFFYSRIGCVLV). The Cytoplasmic portion of the chain corresponds to 238-249 (RLRPPGQGRALR). The helical transmembrane segment at 250–270 (MAAALVIVFFMLWFPYNLTLF) threads the bilayer. The Extracellular segment spans residues 271-292 (LHSLLDLHVFGNCEISHRLDYT). The chain crosses the membrane as a helical span at residues 293 to 313 (LQVTESLAFSHCCFTPVLYAF). Residues 314 to 378 (CSHRFRRYLK…SLNKGEMGNT (65 aa)) are Cytoplasmic-facing. The segment at 326–378 (LSVMLRWHQAPGTPSSNHSESSRVTAQEDVVSMNDLGERQSEDSLNKGEMGNT) is C-terminal cytoplasmic tail.

This sequence belongs to the G-protein coupled receptor 1 family. Atypical chemokine receptor subfamily. In terms of processing, phosphorylated on serine residues in the C-terminal cytoplasmic tail. Expressed on apoptotic neutrophils (at protein level).

It is found in the early endosome. Its subcellular location is the recycling endosome. The protein resides in the cell membrane. In terms of biological role, atypical chemokine receptor that controls chemokine levels and localization via high-affinity chemokine binding that is uncoupled from classic ligand-driven signal transduction cascades, resulting instead in chemokine sequestration, degradation, or transcytosis. Also known as interceptor (internalizing receptor) or chemokine-scavenging receptor or chemokine decoy receptor. Acts as a receptor for chemokines including CCL2, CCL3, CCL3L1, CCL4, CCL5, CCL7, CCL8, CCL11, CCL13, CCL17, CCL22, CCL23, CCL24, SCYA2/MCP-1, SCY3/MIP-1-alpha, SCYA5/RANTES and SCYA7/MCP-3. Upon active ligand stimulation, activates a beta-arrestin 1 (ARRB1)-dependent, G protein-independent signaling pathway that results in the phosphorylation of the actin-binding protein cofilin (CFL1) through a RAC1-PAK1-LIMK1 signaling pathway. Activation of this pathway results in up-regulation of ACKR2 from endosomal compartment to cell membrane, increasing its efficiency in chemokine uptake and degradation. By scavenging chemokines in tissues, on the surfaces of lymphatic vessels, and in placenta, plays an essential role in the resolution (termination) of the inflammatory response and in the regulation of adaptive immune responses. Plays a major role in the immune silencing of macrophages during the resolution of inflammation. Acts as a regulator of inflammatory leukocyte interactions with lymphatic endothelial cells (LECs) and is required for immature/mature dendritic cells discrimination by LECs. This is Atypical chemokine receptor 2 (Ackr2) from Mus musculus (Mouse).